The following is a 276-amino-acid chain: NAD-capped RNA hydrolase NudC (276 aa).

Residue arginine 82 coordinates substrate. Zn(2+) is bound by residues cysteine 112 and cysteine 115. Residue glutamate 125 participates in substrate binding. Zn(2+) is bound by residues cysteine 130 and cysteine 133. Residue tyrosine 138 participates in substrate binding. Residues 139–262 form the Nudix hydrolase domain; sequence PRISPSMIVL…SIARYLIDLY (124 aa). Alanine 172, glutamate 188, and glutamate 192 together coordinate a divalent metal cation. The Nudix box motif lies at 173–194; the sequence is GFAEPGESAEECLVREVREEVA. Position 206-213 (206-213) interacts with substrate; the sequence is QCWPFPHS. An a divalent metal cation-binding site is contributed by glutamate 233. Residue alanine 255 coordinates substrate.

It belongs to the Nudix hydrolase family. NudC subfamily. In terms of assembly, homodimer. The cofactor is Mg(2+). Mn(2+) is required as a cofactor. Requires Zn(2+) as cofactor.

The enzyme catalyses a 5'-end NAD(+)-phospho-ribonucleoside in mRNA + H2O = a 5'-end phospho-adenosine-phospho-ribonucleoside in mRNA + beta-nicotinamide D-ribonucleotide + 2 H(+). The catalysed reaction is NAD(+) + H2O = beta-nicotinamide D-ribonucleotide + AMP + 2 H(+). It catalyses the reaction NADH + H2O = reduced beta-nicotinamide D-ribonucleotide + AMP + 2 H(+). Its function is as follows. mRNA decapping enzyme that specifically removes the nicotinamide adenine dinucleotide (NAD) cap from a subset of mRNAs by hydrolyzing the diphosphate linkage to produce nicotinamide mononucleotide (NMN) and 5' monophosphate mRNA. The NAD-cap is present at the 5'-end of some mRNAs and stabilizes RNA against 5'-processing. Has preference for mRNAs with a 5'-end purine. Catalyzes the hydrolysis of a broad range of dinucleotide pyrophosphates. In Pseudomonas entomophila (strain L48), this protein is NAD-capped RNA hydrolase NudC.